The chain runs to 426 residues: UDP-N-acetylglucosamine 1-carboxyvinyltransferase (426 aa).

Residue 22 to 23 coordinates phosphoenolpyruvate; it reads KN. Arg-99 is a binding site for UDP-N-acetyl-alpha-D-glucosamine. Cys-123 functions as the Proton donor in the catalytic mechanism. Cys-123 is modified (2-(S-cysteinyl)pyruvic acid O-phosphothioketal). Residues 128–132, Asp-313, and Ile-335 contribute to the UDP-N-acetyl-alpha-D-glucosamine site; that span reads RPIDL.

This sequence belongs to the EPSP synthase family. MurA subfamily.

It localises to the cytoplasm. The enzyme catalyses phosphoenolpyruvate + UDP-N-acetyl-alpha-D-glucosamine = UDP-N-acetyl-3-O-(1-carboxyvinyl)-alpha-D-glucosamine + phosphate. It participates in cell wall biogenesis; peptidoglycan biosynthesis. Cell wall formation. Adds enolpyruvyl to UDP-N-acetylglucosamine. This Zymomonas mobilis subsp. mobilis (strain ATCC 31821 / ZM4 / CP4) protein is UDP-N-acetylglucosamine 1-carboxyvinyltransferase.